The following is a 220-amino-acid chain: Glycerol-3-phosphate acyltransferase (220 aa).

The next 6 helical transmembrane spans lie at 11-31, 70-90, 96-116, 127-147, 153-173, and 193-213; these read INVI…GYAL, LLIL…SKLF, LQWM…FLNF, GSVV…WFFV, ISSL…FFVP, and MVLI…NLLA.

Belongs to the PlsY family. In terms of assembly, probably interacts with PlsX.

The protein resides in the cell inner membrane. It carries out the reaction an acyl phosphate + sn-glycerol 3-phosphate = a 1-acyl-sn-glycero-3-phosphate + phosphate. Its pathway is lipid metabolism; phospholipid metabolism. Catalyzes the transfer of an acyl group from acyl-phosphate (acyl-PO(4)) to glycerol-3-phosphate (G3P) to form lysophosphatidic acid (LPA). This enzyme utilizes acyl-phosphate as fatty acyl donor, but not acyl-CoA or acyl-ACP. The polypeptide is Glycerol-3-phosphate acyltransferase (Helicobacter acinonychis (strain Sheeba)).